Reading from the N-terminus, the 150-residue chain is SsrA-binding protein (150 aa).

Belongs to the SmpB family.

The protein localises to the cytoplasm. Functionally, required for rescue of stalled ribosomes mediated by trans-translation. Binds to transfer-messenger RNA (tmRNA), required for stable association of tmRNA with ribosomes. tmRNA and SmpB together mimic tRNA shape, replacing the anticodon stem-loop with SmpB. tmRNA is encoded by the ssrA gene; the 2 termini fold to resemble tRNA(Ala) and it encodes a 'tag peptide', a short internal open reading frame. During trans-translation Ala-aminoacylated tmRNA acts like a tRNA, entering the A-site of stalled ribosomes, displacing the stalled mRNA. The ribosome then switches to translate the ORF on the tmRNA; the nascent peptide is terminated with the 'tag peptide' encoded by the tmRNA and targeted for degradation. The ribosome is freed to recommence translation, which seems to be the essential function of trans-translation. This chain is SsrA-binding protein, found in Flavobacterium psychrophilum (strain ATCC 49511 / DSM 21280 / CIP 103535 / JIP02/86).